We begin with the raw amino-acid sequence, 615 residues long: Dihydroxy-acid dehydratase (615 aa).

Mg(2+) is bound at residue D81. C122 is a binding site for [2Fe-2S] cluster. The Mg(2+) site is built by D123 and K124. K124 is modified (N6-carboxylysine). [2Fe-2S] cluster is bound at residue C195. E491 is a binding site for Mg(2+). Catalysis depends on S517, which acts as the Proton acceptor.

This sequence belongs to the IlvD/Edd family. Homodimer. It depends on [2Fe-2S] cluster as a cofactor. Mg(2+) is required as a cofactor.

The enzyme catalyses (2R)-2,3-dihydroxy-3-methylbutanoate = 3-methyl-2-oxobutanoate + H2O. The catalysed reaction is (2R,3R)-2,3-dihydroxy-3-methylpentanoate = (S)-3-methyl-2-oxopentanoate + H2O. The protein operates within amino-acid biosynthesis; L-isoleucine biosynthesis; L-isoleucine from 2-oxobutanoate: step 3/4. It functions in the pathway amino-acid biosynthesis; L-valine biosynthesis; L-valine from pyruvate: step 3/4. In terms of biological role, functions in the biosynthesis of branched-chain amino acids. Catalyzes the dehydration of (2R,3R)-2,3-dihydroxy-3-methylpentanoate (2,3-dihydroxy-3-methylvalerate) into 2-oxo-3-methylpentanoate (2-oxo-3-methylvalerate) and of (2R)-2,3-dihydroxy-3-methylbutanoate (2,3-dihydroxyisovalerate) into 2-oxo-3-methylbutanoate (2-oxoisovalerate), the penultimate precursor to L-isoleucine and L-valine, respectively. The sequence is that of Dihydroxy-acid dehydratase from Shewanella halifaxensis (strain HAW-EB4).